The following is a 46-amino-acid chain: Iota-conotoxin-like R11.17 (46 aa).

4-hydroxyproline occurs at positions 2 and 11. 4 cysteine pairs are disulfide-bonded: C5-C19, C12-C22, C18-C27, and C21-C38. Position 29 is a 4-hydroxyproline (P29). F44 bears the D-phenylalanine mark.

It belongs to the conotoxin I1 superfamily. Expressed by the venom duct.

It is found in the secreted. In terms of biological role, iota-conotoxins bind to voltage-gated sodium channels (Nav) and act as agonists by shifting the voltage-dependence of activation to more hyperpolarized levels. Produces general excitatory symptoms. In Conus radiatus (Rayed cone), this protein is Iota-conotoxin-like R11.17.